A 32-amino-acid chain; its full sequence is MSDINATRLPSFFFPIPCISDDIEMVLTRGER.

Residues methionine 1–proline 10 constitute a propeptide that is removed on maturation. The cyclopeptide (Ser-Pro) cross-link spans serine 11–proline 17. Positions cysteine 18 to arginine 32 are excised as a propeptide.

The protein belongs to the MSDIN fungal toxin family. Post-translationally, processed by the macrocyclase-peptidase enzyme POPB to yield a toxic cyclic heptapeptide. POPB first removes 10 residues from the N-terminus. Conformational trapping of the remaining peptide forces the enzyme to release this intermediate rather than proceed to macrocyclization. The enzyme rebinds the remaining peptide in a different conformation and catalyzes macrocyclization of the N-terminal 8 residues.

In terms of biological role, probable toxin that belongs to the MSDIN-like toxin family responsible for a large number of food poisoning cases and deaths. In Amanita phalloides (Death cap), this protein is MSDIN-like toxin proprotein 3.